The primary structure comprises 104 residues: Large ribosomal subunit protein uL24 (104 aa).

Belongs to the universal ribosomal protein uL24 family. In terms of assembly, part of the 50S ribosomal subunit.

One of two assembly initiator proteins, it binds directly to the 5'-end of the 23S rRNA, where it nucleates assembly of the 50S subunit. In terms of biological role, one of the proteins that surrounds the polypeptide exit tunnel on the outside of the subunit. The sequence is that of Large ribosomal subunit protein uL24 from Photobacterium profundum (strain SS9).